The primary structure comprises 196 residues: Putative NADH dehydrogenase/NAD(P)H nitroreductase SCO5049 (196 aa).

The protein belongs to the nitroreductase family. HadB/RutE subfamily. The cofactor is FMN.

The chain is Putative NADH dehydrogenase/NAD(P)H nitroreductase SCO5049 from Streptomyces coelicolor (strain ATCC BAA-471 / A3(2) / M145).